Consider the following 364-residue polypeptide: MRSLCVDLGQRSYPIHTGTGILADSALFAPALSKGPVAVVTDSNVAPLYLETLQKTLKALDKPSLSIILPAGEESKSLDNIQEIAGRLLSAGYGRDCTLCALGGGVVGDITGFAAAVYQRGVAYIQVPTTLLAMVDSSVGGKTGVNHPLGKNMIGAFYQPQAVIADTDTLDSLPEREFRSGLAEVIKYGLINDQGFFSWLEDHMDAVLAREPDALTKVIRHSCKDKADIVARDELEGGLRAILNLGHTFGHAIEAATGYGQYLHGEAVAIGMVMAADLSRRLDLIRESEQDRIYALVEATGLPTLAPALPVADYLGFMRVDKKAEGGRVRFILLRGIGSAVITGEVPPAAITQTLQAFMEHGHA.

NAD(+) contacts are provided by residues 105 to 109 (GVVGD), 129 to 130 (TT), lysine 142, and lysine 151. 3 residues coordinate Zn(2+): glutamate 184, histidine 247, and histidine 264.

Belongs to the sugar phosphate cyclases superfamily. Dehydroquinate synthase family. Co(2+) is required as a cofactor. It depends on Zn(2+) as a cofactor. The cofactor is NAD(+).

It localises to the cytoplasm. It catalyses the reaction 7-phospho-2-dehydro-3-deoxy-D-arabino-heptonate = 3-dehydroquinate + phosphate. It functions in the pathway metabolic intermediate biosynthesis; chorismate biosynthesis; chorismate from D-erythrose 4-phosphate and phosphoenolpyruvate: step 2/7. Functionally, catalyzes the conversion of 3-deoxy-D-arabino-heptulosonate 7-phosphate (DAHP) to dehydroquinate (DHQ). In Acidithiobacillus ferrooxidans (strain ATCC 23270 / DSM 14882 / CIP 104768 / NCIMB 8455) (Ferrobacillus ferrooxidans (strain ATCC 23270)), this protein is 3-dehydroquinate synthase.